Reading from the N-terminus, the 738-residue chain is Coiled-coil domain-containing protein 142 (738 aa).

The tract at residues 1–34 is disordered; that stretch reads MARASSSSGPLPPLANVPSSWAQPVGAGEERDEG. Residues 69-92 are a coiled coil; the sequence is ALQRLRATLLRLHREREQLLRARD. Residues 682 to 704 form a disordered region; it reads LSTLGGGGRGGGGGGGPGPSPEA. Gly residues predominate over residues 685–698; sequence LGGGGRGGGGGGGP.

This Mus musculus (Mouse) protein is Coiled-coil domain-containing protein 142 (Ccdc142).